The following is a 582-amino-acid chain: Proline--tRNA ligase (582 aa).

It belongs to the class-II aminoacyl-tRNA synthetase family. ProS type 1 subfamily. As to quaternary structure, homodimer.

The protein resides in the cytoplasm. It catalyses the reaction tRNA(Pro) + L-proline + ATP = L-prolyl-tRNA(Pro) + AMP + diphosphate. Catalyzes the attachment of proline to tRNA(Pro) in a two-step reaction: proline is first activated by ATP to form Pro-AMP and then transferred to the acceptor end of tRNA(Pro). As ProRS can inadvertently accommodate and process non-cognate amino acids such as alanine and cysteine, to avoid such errors it has two additional distinct editing activities against alanine. One activity is designated as 'pretransfer' editing and involves the tRNA(Pro)-independent hydrolysis of activated Ala-AMP. The other activity is designated 'posttransfer' editing and involves deacylation of mischarged Ala-tRNA(Pro). The misacylated Cys-tRNA(Pro) is not edited by ProRS. The chain is Proline--tRNA ligase from Mycobacterium ulcerans (strain Agy99).